Reading from the N-terminus, the 295-residue chain is Zygote arrest protein 1.S (295 aa).

2 disordered regions span residues 80–115 (SVQC…TKTV) and 144–186 (EKGE…APAQ). The span at 144–176 (EKGEAVRSEGSEGGRQEGKQGDGEIKEQMKMDK) shows a compositional bias: basic and acidic residues. The 3CxxC-type zinc-finger motif lies at 197 to 280 (KYGYYHCKDC…RQDLCGRCKG (84 aa)).

The protein belongs to the ZAR1 family. In terms of tissue distribution, ovary. Also expressed in lung and muscle.

Its subcellular location is the cytoplasm. The protein resides in the cytoplasmic ribonucleoprotein granule. MRNA-binding protein required for maternal mRNA storage, translation and degradation during oocyte maturation. Probably promotes formation of some phase-separated membraneless compartment that stores maternal mRNAs in oocytes: acts by undergoing liquid-liquid phase separation upon binding to maternal mRNAs. Binds to the 3'-UTR of maternal mRNAs in immature oocytes, inhibiting their translation. In Xenopus laevis (African clawed frog), this protein is Zygote arrest protein 1.S (zar1.S).